The primary structure comprises 194 residues: Peptidyl-tRNA hydrolase (194 aa).

A tRNA-binding site is contributed by tyrosine 16. Histidine 21 acts as the Proton acceptor in catalysis. TRNA contacts are provided by phenylalanine 67, asparagine 69, and asparagine 115.

This sequence belongs to the PTH family. Monomer.

Its subcellular location is the cytoplasm. It carries out the reaction an N-acyl-L-alpha-aminoacyl-tRNA + H2O = an N-acyl-L-amino acid + a tRNA + H(+). Hydrolyzes ribosome-free peptidyl-tRNAs (with 1 or more amino acids incorporated), which drop off the ribosome during protein synthesis, or as a result of ribosome stalling. Functionally, catalyzes the release of premature peptidyl moieties from peptidyl-tRNA molecules trapped in stalled 50S ribosomal subunits, and thus maintains levels of free tRNAs and 50S ribosomes. This Citrobacter koseri (strain ATCC BAA-895 / CDC 4225-83 / SGSC4696) protein is Peptidyl-tRNA hydrolase.